The chain runs to 561 residues: Urocanate hydratase (561 aa).

Residues 52–53 (GG), Gln-130, 176–178 (GMG), Glu-196, Arg-201, 242–243 (NA), 263–267 (QTSAH), 273–274 (YL), and Tyr-322 contribute to the NAD(+) site. Cys-410 is an active-site residue. Gly-492 contacts NAD(+).

The protein belongs to the urocanase family. The cofactor is NAD(+).

The protein localises to the cytoplasm. It carries out the reaction 4-imidazolone-5-propanoate = trans-urocanate + H2O. The protein operates within amino-acid degradation; L-histidine degradation into L-glutamate; N-formimidoyl-L-glutamate from L-histidine: step 2/3. In terms of biological role, catalyzes the conversion of urocanate to 4-imidazolone-5-propionate. This chain is Urocanate hydratase, found in Salmonella newport (strain SL254).